A 136-amino-acid chain; its full sequence is uncharacterized protein (136 aa).

The chain crosses the membrane as a helical span at residues 19–39; the sequence is LGFPLGTALLLIIIFSLSGIF. Disordered regions lie at residues 54-87 and 112-136; these read SLAN…LSVP and KLTV…VPLY.

The protein localises to the membrane. This is an uncharacterized protein from Arabidopsis thaliana (Mouse-ear cress).